Consider the following 286-residue polypeptide: MSIISTKYLLQDAQANGYAVPAFNIHNAETIQAILEVCSEMRSPVILAGTPGTFKHIALEEIYALCSAYSTTYNMPLALHLDHHESLDDIRRKVHAGVRSAMIDGSHFPFAENVKLVKSVVDFCHSQDCSVEAELGRLGGVEDDMSVDAESAFLTDPQEAKRFVELTGVDSLAVAIGTAHGLYSKTPKIDFQRLAEIREVVDVPLVLHGASDVPDEFVRRTIELGVTKVNVATELKIAFAGAVKAWFAENPQGNDPRNYMRVGMDAMKEVVRNKINVCGSANRISA.

Catalysis depends on aspartate 82, which acts as the Proton donor. Residues histidine 83 and histidine 180 each contribute to the Zn(2+) site. Residue glycine 181 participates in dihydroxyacetone phosphate binding. A Zn(2+)-binding site is contributed by histidine 208. Dihydroxyacetone phosphate contacts are provided by residues 209-211 (GAS) and 230-233 (NVAT).

Belongs to the class II fructose-bisphosphate aldolase family. TagBP aldolase KbaY subfamily. As to quaternary structure, homotetramer. Forms a complex with KbaZ. Requires Zn(2+) as cofactor.

The enzyme catalyses D-tagatofuranose 1,6-bisphosphate = D-glyceraldehyde 3-phosphate + dihydroxyacetone phosphate. The protein operates within carbohydrate metabolism; D-tagatose 6-phosphate degradation; D-glyceraldehyde 3-phosphate and glycerone phosphate from D-tagatose 6-phosphate: step 2/2. Functionally, catalytic subunit of the tagatose-1,6-bisphosphate aldolase KbaYZ, which catalyzes the reversible aldol condensation of dihydroxyacetone phosphate (DHAP or glycerone-phosphate) with glyceraldehyde 3-phosphate (G3P) to produce tagatose 1,6-bisphosphate (TBP). Requires KbaZ subunit for full activity and stability. Is involved in the catabolism of N-acetylgalactosamine and D-galactosamine. The chain is D-tagatose-1,6-bisphosphate aldolase subunit KbaY (kbaY) from Escherichia coli.